A 479-amino-acid polypeptide reads, in one-letter code: Glycogen synthase (479 aa).

Lys15 serves as a coordination point for ADP-alpha-D-glucose.

Belongs to the glycosyltransferase 1 family. Bacterial/plant glycogen synthase subfamily.

The enzyme catalyses [(1-&gt;4)-alpha-D-glucosyl](n) + ADP-alpha-D-glucose = [(1-&gt;4)-alpha-D-glucosyl](n+1) + ADP + H(+). It participates in glycan biosynthesis; glycogen biosynthesis. In terms of biological role, synthesizes alpha-1,4-glucan chains using ADP-glucose. The protein is Glycogen synthase of Pectobacterium carotovorum subsp. carotovorum (strain PC1).